The sequence spans 194 residues: Molybdenum cofactor guanylyltransferase (194 aa).

GTP is bound by residues 12–14 (LAG), K25, N53, D71, and D101. D101 lines the Mg(2+) pocket.

Belongs to the MobA family. In terms of assembly, monomer. It depends on Mg(2+) as a cofactor.

The protein resides in the cytoplasm. It catalyses the reaction Mo-molybdopterin + GTP + H(+) = Mo-molybdopterin guanine dinucleotide + diphosphate. Transfers a GMP moiety from GTP to Mo-molybdopterin (Mo-MPT) cofactor (Moco or molybdenum cofactor) to form Mo-molybdopterin guanine dinucleotide (Mo-MGD) cofactor. The polypeptide is Molybdenum cofactor guanylyltransferase (Escherichia coli O157:H7).